The sequence spans 1776 residues: COPII coat assembly protein SEC16 (1776 aa).

4 disordered regions span residues 1–129, 143–277, 292–817, and 1428–1776; these read MDSD…EKRV, AQAL…WGNT, ESVE…TGMK, and GVER…GQAS. Residues 46–79 show a composition bias toward acidic residues; sequence SSEEESEEEEEEEDDDEDDEEEEDSDEDDDEEEN. Polar residues-rich tracts occupy residues 111–124 and 144–158; these read LTKS…SQGS and QALN…GQTK. Acidic residues predominate over residues 162–181; it reads TDEAESDEDSEEEESSDEEA. Residues 187 to 196 show a composition bias toward basic and acidic residues; sequence HQADNYEHQG. Acidic residues-rich tracts occupy residues 217 to 226 and 321 to 353; these read AAPESDDWGD and DLDL…DDEP. Composition is skewed to polar residues over residues 394 to 406 and 415 to 439; these read NPPQ…SITT and YGQN…QSYA. A compositionally biased stretch (pro residues) spans 522 to 533; it reads PAVPPKSAPPAK. The segment covering 557 to 573 has biased composition (low complexity); the sequence is PQPAAAAQSPSLQGPPQ. Polar residues predominate over residues 612 to 627; sequence SQPSVPTRQNSLPIPQ. Residues 629 to 644 show a composition bias toward pro residues; the sequence is TAPPPSSRYSPAPPSV. Polar residues-rich tracts occupy residues 692–704 and 716–734; these read TPSQ…TSSP and NTTN…TQSA. A compositionally biased stretch (low complexity) spans 761-782; sequence DRPPTTARSDTPPPTRSSTSSA. 2 stretches are compositionally biased toward polar residues: residues 1445–1454 and 1477–1496; these read RTQAKMQSYS and NEET…QGTG. The span at 1560–1586 shows a compositional bias: basic and acidic residues; it reads SDADKKADEAFRKAAEADAKRDKENAA. Positions 1652 to 1661 are enriched in low complexity; the sequence is PMGARSASGG. Over residues 1662 to 1671 the composition is skewed to pro residues; it reads MPPPSGPPPS.

Belongs to the SEC16 family.

Its subcellular location is the endoplasmic reticulum membrane. Involved in the initiation of assembly of the COPII coat required for the formation of transport vesicles from the endoplasmic reticulum (ER) and the selection of cargo molecules. Also involved in autophagy. This chain is COPII coat assembly protein SEC16 (SEC16), found in Phaeosphaeria nodorum (strain SN15 / ATCC MYA-4574 / FGSC 10173) (Glume blotch fungus).